A 443-amino-acid polypeptide reads, in one-letter code: Phosphomevalonate kinase ERG8 (443 aa).

An ATP-binding site is contributed by 160–170 (ANKTGLGSSAA).

It belongs to the GHMP kinase family. Mevalonate kinase subfamily.

The enzyme catalyses (R)-5-phosphomevalonate + ATP = (R)-5-diphosphomevalonate + ADP. It functions in the pathway isoprenoid biosynthesis; isopentenyl diphosphate biosynthesis via mevalonate pathway; isopentenyl diphosphate from (R)-mevalonate: step 2/3. Functionally, phosphomevalonate kinase; part of the second module of ergosterol biosynthesis pathway that includes the middle steps of the pathway. ERG8 converts 5-phosphomevalonate to 5-diphosphomevalonate. The second module is carried out in the vacuole and involves the formation of farnesyl diphosphate, which is also an important intermediate in the biosynthesis of ubiquinone, dolichol, heme and prenylated proteins. Activity by the mevalonate kinase ERG12 (FG05912) first converts mevalonate into 5-phosphomevalonate. 5-phosphomevalonate is then further converted to 5-diphosphomevalonate by the phosphomevalonate kinase ERG8 (FG09764). The diphosphomevalonate decarboxylase ERG19 (FG10424) then produces isopentenyl diphosphate. The isopentenyl-diphosphate delta-isomerase IDI1 (FG09722) then catalyzes the 1,3-allylic rearrangement of the homoallylic substrate isopentenyl (IPP) to its highly electrophilic allylic isomer, dimethylallyl diphosphate (DMAPP). Finally the farnesyl diphosphate synthase ERG20 (FG06784) catalyzes the sequential condensation of isopentenyl pyrophosphate with dimethylallyl pyrophosphate, and then with the resultant geranylpyrophosphate to the ultimate product farnesyl pyrophosphate. The protein is Phosphomevalonate kinase ERG8 of Gibberella zeae (strain ATCC MYA-4620 / CBS 123657 / FGSC 9075 / NRRL 31084 / PH-1) (Wheat head blight fungus).